The sequence spans 385 residues: Putative ribosomal RNA large subunit methyltransferase MJ1653 (385 aa).

A PUA domain is found at 2–81 (TTKLYVDFGG…LDENYIREKI (80 aa)).

This sequence belongs to the methyltransferase superfamily. RlmI family.

The protein resides in the cytoplasm. In Methanocaldococcus jannaschii (strain ATCC 43067 / DSM 2661 / JAL-1 / JCM 10045 / NBRC 100440) (Methanococcus jannaschii), this protein is Putative ribosomal RNA large subunit methyltransferase MJ1653.